The chain runs to 864 residues: NT-3 growth factor receptor (864 aa).

The N-terminal stretch at 1 to 31 is a signal peptide; that stretch reads MDVSLCPAKCSFWRIFLLGSVWLDYVGSVLA. 2 disulfide bridges follow: cysteine 32–cysteine 38 and cysteine 36–cysteine 45. Over 32–429 the chain is Extracellular; that stretch reads CPANCVCSKT…TVTHKPEEDT (398 aa). N-linked (GlcNAc...) asparagine glycans are attached at residues asparagine 68, asparagine 72, and asparagine 79. LRR repeat units follow at residues 104–125 and 128–149; these read GLQK…AFAK and HLRY…LFQT. N-linked (GlcNAc...) asparagine glycans are attached at residues asparagine 133 and asparagine 163. An LRRCT domain is found at 160-209; the sequence is NFFNCSCDIRWMQLWQEQGEARLDSQSLYCISADGSQLPLFRMNISQCDL. 2 disulfide bridges follow: cysteine 164/cysteine 189 and cysteine 166/cysteine 207. Residues asparagine 203, asparagine 218, asparagine 232, asparagine 259, asparagine 267, asparagine 272, and asparagine 294 are each glycosylated (N-linked (GlcNAc...) asparagine). Ig-like C2-type domains follow at residues 210-300 and 309-382; these read PEIS…VALT and SLVE…IAKN. Cysteines 231 and 284 form a disulfide. Cysteine 320 and cysteine 362 are disulfide-bonded. N-linked (GlcNAc...) asparagine glycans are attached at residues asparagine 375 and asparagine 388. The chain crosses the membrane as a helical span at residues 430 to 453; sequence FGVSIAVGLAAFACVLLVVLFIMI. The Cytoplasmic segment spans residues 454 to 864; sequence NKYGRRSKFG…ATPIYLDILG (411 aa). Position 493 is a phosphoserine (serine 493). The residue at position 516 (tyrosine 516) is a Phosphotyrosine; by autocatalysis. In terms of domain architecture, Protein kinase spans 538 to 853; the sequence is IVLKRELGEG…EIYKILHALG (316 aa). ATP contacts are provided by residues 544 to 552 and lysine 572; that span reads LGEGAFGKV. Aspartate 679 serves as the catalytic Proton acceptor. Phosphotyrosine; by autocatalysis occurs at positions 705, 709, 710, and 859.

Belongs to the protein kinase superfamily. Tyr protein kinase family. Insulin receptor subfamily. Exists in a dynamic equilibrium between monomeric (low affinity) and dimeric (high affinity) structures. Binds SH2B2. Interacts with SQSTM1 and KIDINS220. Interacts with PTPRS. Interacts with MAPK8IP3/JIP3. Ligand-mediated auto-phosphorylation. Widely expressed, mainly in the nervous tissue.

The protein localises to the membrane. The enzyme catalyses L-tyrosyl-[protein] + ATP = O-phospho-L-tyrosyl-[protein] + ADP + H(+). Functionally, receptor tyrosine kinase involved in nervous system and probably heart development. Upon binding of its ligand NTF3/neurotrophin-3, NTRK3 autophosphorylates and activates different signaling pathways, including the phosphatidylinositol 3-kinase/AKT and the MAPK pathways, that control cell survival and differentiation. NTRK3 isoforms containing insertions within the kinase domain can autophosphorylate in response to NTF3/neurotrophin-3, but cannot mediate downstream phenotypic responses. The protein is NT-3 growth factor receptor (Ntrk3) of Rattus norvegicus (Rat).